Consider the following 83-residue polypeptide: Three-finger toxin MALT0066C (83 aa).

Positions 1 to 21 (MKTLLLTLVVVTIVCLDFGHT) are cleaved as a signal peptide. 4 disulfide bridges follow: Cys-24–Cys-45, Cys-38–Cys-62, Cys-64–Cys-75, and Cys-76–Cys-81.

This sequence belongs to the three-finger toxin family. Short-chain subfamily. Type I alpha-neurotoxin sub-subfamily. As to quaternary structure, dimer. As to expression, expressed by the venom gland.

Its subcellular location is the secreted. Binds to muscle nicotinic acetylcholine receptor (nAChR) and inhibit acetylcholine from binding to the receptor, thereby impairing neuromuscular transmission. This Micrurus altirostris (Uruguayan coral snake) protein is Three-finger toxin MALT0066C.